The sequence spans 998 residues: UPF0182 protein AAur_2732 (998 aa).

7 helical membrane-spanning segments follow: residues 18-38 (GALT…IFFA), 64-84 (IITF…AIRI), 115-135 (VVMI…AASQ), 168-188 (FLGF…IAGI), 211-231 (QIHI…NFWL), 260-280 (AILA…AIIG), and 287-307 (IGTA…PWVI). 3 disordered regions span residues 490-518 (GAPD…TFSG), 888-923 (LFGG…PTDA), and 971-998 (QARL…SPSS). The span at 496–509 (PNREQDRPAGREGG) shows a compositional bias: basic and acidic residues. Over residues 908–919 (TSPPGTTPPPAG) the composition is skewed to pro residues. Residues 976 to 990 (ATPAPTATPGATPSA) show a composition bias toward low complexity.

The protein belongs to the UPF0182 family.

Its subcellular location is the cell membrane. The polypeptide is UPF0182 protein AAur_2732 (Paenarthrobacter aurescens (strain TC1)).